Here is a 63-residue protein sequence, read N- to C-terminus: EIYFEPDFGFPPDCKVYTEACTREYNPICDSAAKTYSNECTFCNEKMNNDADIHFNHFGECEY.

The Kazal-like domain maps to 8-63; sequence FGFPPDCKVYTEACTREYNPICDSAAKTYSNECTFCNEKMNNDADIHFNHFGECEY. 3 cysteine pairs are disulfide-bonded: C14–C43, C21–C40, and C29–C61.

In terms of tissue distribution, seminal plasma.

Its subcellular location is the secreted. Its function is as follows. Strong inhibitor of acrosin. In Bos taurus (Bovine), this protein is Acrosin inhibitor 1.